A 1276-amino-acid chain; its full sequence is Component of gems protein 5 (1276 aa).

The segment at 53-55 (NWY) is interaction with U4 snRNA. 8 WD repeats span residues 92–139 (GHTD…DDHN), 183–223 (EHKA…VFPI), 228–268 (GNNI…TVCK), 271–336 (AHSA…IESG), 364–405 (NDKQ…SPPE), 438–481 (TTKN…IKIQ), 485–522 (GFVY…KDAY), and 530–574 (GIQS…SKIF). Residues 138–157 (HNEDTEIGDDFKHGSGGGGS) form a disordered region. The tract at residues 586-652 (IWKPPPTPTP…NSNNEQQPNK (67 aa)) is disordered. Residues 598-646 (NINNNNNNNNNNNNNNNNNNNNNNNNNNNNNNNNNNNNINNNNNNNSNN) are compositionally biased toward low complexity. WD repeat units lie at residues 688–727 (TFSK…LTRI) and 729–771 (EHKK…NQNE). Positions 772–793 (NEKKIDNEKGKENENEKGKENE) are enriched in basic and acidic residues. The tract at residues 772 to 809 (NEKKIDNEKGKENENEKGKENENENENENENENENENE) is disordered. Positions 778-829 (NEKGKENENEKGKENENENENENENENENENENEIENIVNNNNENDTEIEIK) form a coiled coil. Residues 794–809 (NENENENENENENENE) show a composition bias toward acidic residues. WD repeat units follow at residues 863 to 903 (GHKN…AISN) and 906 to 946 (GHDG…FKTV). Residues 967-997 (ITEQQQQQQQPQSPIKSNPDQSNNPSLVPPI) form a disordered region. Positions 979 to 992 (SPIKSNPDQSNNPS) are enriched in polar residues.

It belongs to the WD repeat gemin-5 family. Part of the core SMN complex.

The protein localises to the nucleus. The protein resides in the nucleoplasm. It localises to the gem. Its subcellular location is the cytoplasm. Its function is as follows. The SMN complex catalyzes the assembly of small nuclear ribonucleoproteins (snRNPs), the building blocks of the spliceosome, and thereby plays an important role in the splicing of cellular pre-mRNAs. Most spliceosomal snRNPs contain a common set of Sm proteins SNRPB, SNRPD1, SNRPD2, SNRPD3, SNRPE, SNRPF and SNRPG that assemble in a heptameric protein ring on the Sm site of the small nuclear RNA to form the core snRNP (Sm core). In the cytosol, the Sm proteins SNRPD1, SNRPD2, SNRPE, SNRPF and SNRPG are trapped in an inactive 6S pICln-Sm complex by the chaperone CLNS1A that controls the assembly of the core snRNP. To assemble core snRNPs, the SMN complex accepts the trapped 5Sm proteins from CLNS1A forming an intermediate. Binding of snRNA inside 5Sm ultimately triggers eviction of the SMN complex, thereby allowing binding of SNRPD3 and SNRPB to complete assembly of the core snRNP. Within the SMN complex, GEMIN5 recognizes and delivers the small nuclear RNAs (snRNAs) to the SMN complex. Binds to the 7-methylguanosine cap of RNA molecules. The chain is Component of gems protein 5 (gemin5) from Dictyostelium discoideum (Social amoeba).